The following is a 280-amino-acid chain: Undecaprenyl-diphosphatase (280 aa).

Helical transmembrane passes span 1–21 (MTIL…FLPV), 41–61 (FVRA…LVLY), 87–107 (FDLY…GFLF), 115–135 (LGSV…MLFV), 147–167 (ITYP…FLPG), 186–206 (KAAA…ATLL), 225–245 (IVLL…IKFF), and 260–280 (YRIL…SLAV).

It belongs to the UppP family.

The protein resides in the cell inner membrane. It catalyses the reaction di-trans,octa-cis-undecaprenyl diphosphate + H2O = di-trans,octa-cis-undecaprenyl phosphate + phosphate + H(+). Functionally, catalyzes the dephosphorylation of undecaprenyl diphosphate (UPP). Confers resistance to bacitracin. This Porphyromonas gingivalis (strain ATCC 33277 / DSM 20709 / CIP 103683 / JCM 12257 / NCTC 11834 / 2561) protein is Undecaprenyl-diphosphatase.